Reading from the N-terminus, the 435-residue chain is uncharacterized protein (435 aa).

Helical transmembrane passes span 26-46 (LLSG…VAAP), 61-81 (IVFS…GSLL), 96-116 (IWSF…LYLF), 119-139 (LIGL…ALWF), 150-170 (LFDS…AFLV), 177-197 (VAFL…WQYY), 242-262 (VWGL…LLTW), 281-301 (FTAV…GWLV), 325-345 (FGFF…IICI), 347-367 (IGLA…AELA), 385-405 (LFGG…TGSF), and 407-427 (LSFL…VFVL).

Belongs to the major facilitator superfamily. Phthalate permease family.

It localises to the cell membrane. This is an uncharacterized protein from Bacillus subtilis (strain 168).